The chain runs to 428 residues: Adenylosuccinate synthetase (428 aa).

Residues 12–18 (GDEGKGK) and 40–42 (GHT) each bind GTP. The Proton acceptor role is filled by D13. Mg(2+) is bound by residues D13 and G40. IMP is bound by residues 13-16 (DEGK), 38-41 (NAGH), T128, R142, Q223, T238, and R302. H41 functions as the Proton donor in the catalytic mechanism. 298–304 (TTTGRPR) is a binding site for substrate. GTP-binding positions include R304, 330–332 (SID), and 412–414 (SVG).

This sequence belongs to the adenylosuccinate synthetase family. As to quaternary structure, homodimer. Mg(2+) is required as a cofactor.

The protein resides in the cytoplasm. It carries out the reaction IMP + L-aspartate + GTP = N(6)-(1,2-dicarboxyethyl)-AMP + GDP + phosphate + 2 H(+). It participates in purine metabolism; AMP biosynthesis via de novo pathway; AMP from IMP: step 1/2. Its function is as follows. Plays an important role in the de novo pathway of purine nucleotide biosynthesis. Catalyzes the first committed step in the biosynthesis of AMP from IMP. This chain is Adenylosuccinate synthetase, found in Geobacillus kaustophilus (strain HTA426).